The primary structure comprises 320 residues: GMP reductase (320 aa).

Residue cysteine 174 is the Thioimidate intermediate of the active site. 203-226 (IIADGGLRVHGDIAKSIRMGASFC) serves as a coordination point for NADP(+).

The protein belongs to the IMPDH/GMPR family. GuaC type 2 subfamily.

It carries out the reaction IMP + NH4(+) + NADP(+) = GMP + NADPH + 2 H(+). In terms of biological role, catalyzes the irreversible NADPH-dependent deamination of GMP to IMP. It functions in the conversion of nucleobase, nucleoside and nucleotide derivatives of G to A nucleotides, and in maintaining the intracellular balance of A and G nucleotides. This Mycoplasma mycoides subsp. mycoides SC (strain CCUG 32753 / NCTC 10114 / PG1) protein is GMP reductase.